The sequence spans 225 residues: Orotate phosphoribosyltransferase (225 aa).

A 5-phospho-alpha-D-ribose 1-diphosphate-binding site is contributed by Lys-32. 40–41 (FF) serves as a coordination point for orotate. Residues 78–79 (YK), Arg-104, Lys-105, Lys-108, His-110, and 129–137 (DDVISAGTS) contribute to the 5-phospho-alpha-D-ribose 1-diphosphate site. Ser-133 and Arg-161 together coordinate orotate.

This sequence belongs to the purine/pyrimidine phosphoribosyltransferase family. PyrE subfamily. Homodimer. Requires Mg(2+) as cofactor.

It carries out the reaction orotidine 5'-phosphate + diphosphate = orotate + 5-phospho-alpha-D-ribose 1-diphosphate. Its pathway is pyrimidine metabolism; UMP biosynthesis via de novo pathway; UMP from orotate: step 1/2. Functionally, catalyzes the transfer of a ribosyl phosphate group from 5-phosphoribose 1-diphosphate to orotate, leading to the formation of orotidine monophosphate (OMP). This Cupriavidus metallidurans (strain ATCC 43123 / DSM 2839 / NBRC 102507 / CH34) (Ralstonia metallidurans) protein is Orotate phosphoribosyltransferase.